The following is a 121-amino-acid chain: Structural protein p14.5 (121 aa).

2 disordered regions span residues 1 to 24 (MADFNSPIQYLKEDSRDRTSIGSL) and 84 to 121 (TSLVPEETDNKPEDDEESGAKPKKKKHLFPKLSSHKSK). A2 is modified (N-acetylalanine; by host). Basic residues predominate over residues 104–121 (KPKKKKHLFPKLSSHKSK).

This sequence belongs to the asfivirus structural protein p14.5 family. As to quaternary structure, interacts with the major capsid protein. Interacts with host IRF3; this interaction interferes with the recruitment of IRF3 to TBK1. In terms of processing, acetylated.

It is found in the virion. Its function is as follows. Structural protein required for transport of intracellular particles from the assembly sites to the plasma membrane. Binds to both ssDNA and dsDNA. Suppressed the activation of the cGAS/STING pathway by interfering with the recruitment of IRF3 to TBK1, which in turn suppresses IRF3 phosphorylation, decreasing interferon production. The protein is Structural protein p14.5 of Ornithodoros (relapsing fever ticks).